The primary structure comprises 66 residues: UPF0391 membrane protein AM1_5042 (66 aa).

Helical transmembrane passes span 4 to 24 (LTLT…SGIA) and 28 to 47 (AAIA…LVWP).

Belongs to the UPF0391 family.

It localises to the cell membrane. This is UPF0391 membrane protein AM1_5042 from Acaryochloris marina (strain MBIC 11017).